Here is a 338-residue protein sequence, read N- to C-terminus: GTPase Obg (338 aa).

The Obg domain maps to 1-159 (MQFIDEVKIH…RWLRLELKLM (159 aa)). Residues 66–91 (KAGRGKNGMGKDRHGANGDDLTIPVP) are disordered. In terms of domain architecture, OBG-type G spans 160–331 (ADVGLLGFPN…LLDEIARHLW (172 aa)). Residues 166–173 (GFPNVGKS), 191–195 (FTTIK), 213–216 (DIPG), 283–286 (NKID), and 312–314 (SAA) each bind GTP. Mg(2+)-binding residues include Ser-173 and Thr-193.

Belongs to the TRAFAC class OBG-HflX-like GTPase superfamily. OBG GTPase family. As to quaternary structure, monomer. It depends on Mg(2+) as a cofactor.

The protein resides in the cytoplasm. Functionally, an essential GTPase which binds GTP, GDP and possibly (p)ppGpp with moderate affinity, with high nucleotide exchange rates and a fairly low GTP hydrolysis rate. Plays a role in control of the cell cycle, stress response, ribosome biogenesis and in those bacteria that undergo differentiation, in morphogenesis control. The sequence is that of GTPase Obg from Geobacter metallireducens (strain ATCC 53774 / DSM 7210 / GS-15).